Here is a 350-residue protein sequence, read N- to C-terminus: Farnesyl pyrophosphate synthase (350 aa).

Isopentenyl diphosphate-binding residues include Lys55, Arg58, and Gln94. Residues Asp101 and Asp105 each coordinate Mg(2+). A dimethylallyl diphosphate-binding site is contributed by Arg110. An isopentenyl diphosphate-binding site is contributed by Arg111. Dimethylallyl diphosphate-binding residues include Lys198, Thr199, Gln237, Lys254, and Lys263.

Belongs to the FPP/GGPP synthase family. Requires Mg(2+) as cofactor.

It is found in the cytoplasm. The catalysed reaction is isopentenyl diphosphate + dimethylallyl diphosphate = (2E)-geranyl diphosphate + diphosphate. It carries out the reaction isopentenyl diphosphate + (2E)-geranyl diphosphate = (2E,6E)-farnesyl diphosphate + diphosphate. It functions in the pathway isoprenoid biosynthesis; farnesyl diphosphate biosynthesis; farnesyl diphosphate from geranyl diphosphate and isopentenyl diphosphate: step 1/1. Its pathway is isoprenoid biosynthesis; geranyl diphosphate biosynthesis; geranyl diphosphate from dimethylallyl diphosphate and isopentenyl diphosphate: step 1/1. Its function is as follows. Catalyzes the sequential condensation of isopentenyl pyrophosphate with the allylic pyrophosphates, dimethylallyl pyrophosphate, and then with the resultant geranylpyrophosphate to the ultimate product farnesyl pyrophosphate. This Zea mays (Maize) protein is Farnesyl pyrophosphate synthase (FPS).